Here is a 192-residue protein sequence, read N- to C-terminus: MVSVEELMGQVIDSEMEVISKELSKALEEALNLVKQKRDSVERTYTAKMQEMVTKAKEEIEGERARLDIEVKRAVLGEKNYWLNKVYEGTIKSLGTVKNSQGYKQGLESVLKRELRDGSIVYCSEDEVDQVQKMIKGLKAKAEVRSDPKIMGGVKIQYSDVGLVRDYSLNLILDQVFESLKPKIAEILFGEM.

This sequence belongs to the V-ATPase E subunit family. In terms of assembly, has multiple subunits with at least A(3), B(3), C, D, E, F, H, I and proteolipid K(x).

The protein resides in the cell membrane. Component of the A-type ATP synthase that produces ATP from ADP in the presence of a proton gradient across the membrane. This is A-type ATP synthase subunit E from Metallosphaera sedula (strain ATCC 51363 / DSM 5348 / JCM 9185 / NBRC 15509 / TH2).